The following is a 186-amino-acid chain: DNA damage up-regulated protein (186 aa).

The disordered stretch occupies residues 147–166 (ATENGEGCRPARDPASSPSS).

Interacts with DNA damage response proteins ATR, H2AX, PCNA, RAD18 and RAD51C. Forms a complex with H2AX and RAD18 following DDUP phosphorylation. In terms of processing, phosphorylated in an ATR-dependent manner; phosphorylation is required for interaction with H2AX and RAD18 and for DDUP-mediated DNA damage repair.

It is found in the nucleus. It localises to the chromosome. Its function is as follows. Promotes DNA damage repair through both homologous recombination repair (HRR) and post-replication repair (PRR) mechanisms. Enhances the retention of DNA damage response protein RAD18 at sites of DNA damage. This allows for HRR via association of RAD18 with RAD51C and for PRR via RAD18-mediated promotion of PCNA monoubiquitination. The polypeptide is DNA damage up-regulated protein (Homo sapiens (Human)).